The primary structure comprises 360 residues: DNA replication and repair protein RecF (360 aa).

30 to 37 (GHNGSGKT) provides a ligand contact to ATP.

The protein belongs to the RecF family.

It localises to the cytoplasm. Its function is as follows. The RecF protein is involved in DNA metabolism; it is required for DNA replication and normal SOS inducibility. RecF binds preferentially to single-stranded, linear DNA. It also seems to bind ATP. This chain is DNA replication and repair protein RecF, found in Shewanella sediminis (strain HAW-EB3).